Consider the following 255-residue polypeptide: Imidazole glycerol phosphate synthase subunit HisF (255 aa).

Active-site residues include Asp-12 and Asp-131.

The protein belongs to the HisA/HisF family. In terms of assembly, heterodimer of HisH and HisF.

It localises to the cytoplasm. The enzyme catalyses 5-[(5-phospho-1-deoxy-D-ribulos-1-ylimino)methylamino]-1-(5-phospho-beta-D-ribosyl)imidazole-4-carboxamide + L-glutamine = D-erythro-1-(imidazol-4-yl)glycerol 3-phosphate + 5-amino-1-(5-phospho-beta-D-ribosyl)imidazole-4-carboxamide + L-glutamate + H(+). Its pathway is amino-acid biosynthesis; L-histidine biosynthesis; L-histidine from 5-phospho-alpha-D-ribose 1-diphosphate: step 5/9. Its function is as follows. IGPS catalyzes the conversion of PRFAR and glutamine to IGP, AICAR and glutamate. The HisF subunit catalyzes the cyclization activity that produces IGP and AICAR from PRFAR using the ammonia provided by the HisH subunit. This Neisseria meningitidis serogroup C / serotype 2a (strain ATCC 700532 / DSM 15464 / FAM18) protein is Imidazole glycerol phosphate synthase subunit HisF.